Here is a 591-residue protein sequence, read N- to C-terminus: Probable translation initiation factor IF-2 (591 aa).

Positions Leu-7–Glu-223 constitute a tr-type G domain. The G1 stretch occupies residues Gly-16–Thr-23. Residue Gly-16–Thr-23 participates in GTP binding. Residues Ala-41–His-45 are G2. Residues Asp-78 to Gly-81 are G3. GTP is bound by residues Asp-78–His-82 and Asn-132–Asp-135. The G4 stretch occupies residues Asn-132–Asp-135. The interval Ser-200–Met-202 is G5.

Belongs to the TRAFAC class translation factor GTPase superfamily. Classic translation factor GTPase family. IF-2 subfamily.

Function in general translation initiation by promoting the binding of the formylmethionine-tRNA to ribosomes. Seems to function along with eIF-2. The chain is Probable translation initiation factor IF-2 from Methanosarcina barkeri (strain Fusaro / DSM 804).